A 638-amino-acid chain; its full sequence is MSQQETHGFQTEVKQLLHLMIHSLYSNKEIFLRELVSNAADAADKLRYEALTNDNLYEGDGELRVRISADKEKGTVTIEDNGIGMTRDGVIEHLGTIAKSGTADFFKKLSGDESKDSQLIGQFGVGFYSSFIVADRVTVRTRAAGHSADEAVLWESAGEGDFTVETISKQTRGTEITLHLRDDEKEFADDYRLRSIITKYSDHISVPVEMFEAGTPAVEATEDTEAVAATEGSWKPMNKATALWTRNKSDVSDEEYQEFYKHISHDFTDPLLWSHNRVEGKQEYTSLLYIPAKAPWDMWNRDRKHGLKLFVQRVFVMDDAEQFMPSYLRFVQGLIDSNDLPLNVSREILQDNKVTTALRTAVTKRVLGMLEKLAKNDAEKYQSFWTEFGQVLKEGPAEDFANKERIAGLLRFASTHTGEATPNVSLADYIERMQEGQSKIYYIVADSHEAAANSPHLELLRKKGIEVLLMSERIDEWLINHLTEFDGKKLHSVTRGDLELGELEDDDEKEAQEKLQTESEGLVKRVKDSLGDKVSEVKVTTRLTDTPACVVAGEGEMSTQMIKLMQAAGQDVPEPKPTFELNPEHPLVARLNDEQDEQQFAQWSELLLQQALLSEKGSLADPSAFIKLMNQMLLASVK.

Positions 1-346 (MSQQETHGFQ…SNDLPLNVSR (346 aa)) are a; substrate-binding. The segment at 347-563 (EILQDNKVTT…EGEMSTQMIK (217 aa)) is b. Residues 564 to 638 (LMQAAGQDVP…MNQMLLASVK (75 aa)) are c.

This sequence belongs to the heat shock protein 90 family. Homodimer.

It is found in the cytoplasm. Molecular chaperone. Has ATPase activity. The sequence is that of Chaperone protein HtpG from Shewanella pealeana (strain ATCC 700345 / ANG-SQ1).